The primary structure comprises 1073 residues: Receptor-type guanylate cyclase gcy-23 (1073 aa).

A signal peptide spans 1 to 15; the sequence is MRRELFIFLLLLGEC. At 16–458 the chain is on the extracellular side; sequence ANVKVKVGHI…FRNEKCDYTT (443 aa). N-linked (GlcNAc...) asparagine glycosylation is present at N336. Residues 459 to 479 form a helical membrane-spanning segment; it reads LIIGGCIVLLIILLIICFFIL. Topologically, residues 480–1073 are cytoplasmic; that stretch reads SRVCENRALA…QQQNFSQLGI (594 aa). Residues 508-808 form the Protein kinase domain; that stretch reads MKSMLSIGSS…RVRLNTENYL (301 aa). The stretch at 813–844 forms a coiled coil; it reads SLVDQMMRMMEQYANNLEKLVAERTGMLEEAN. A Guanylate cyclase domain is found at 878–1008; sequence TVMFSDIVGF…DTVNVASRME (131 aa). 3 residues coordinate Mg(2+): D883, I884, and D927.

It belongs to the adenylyl cyclase class-4/guanylyl cyclase family. As to expression, expressed specifically in AFD sensory neurons.

The protein resides in the cell membrane. The protein localises to the cell projection. It localises to the cilium. It catalyses the reaction GTP = 3',5'-cyclic GMP + diphosphate. Its function is as follows. Guanylate cyclase involved in the production of the second messenger cGMP. Regulates thermotaxis responses in AFD sensory neurons. May regulate AFD neuronal activity such as calcium responses to temperature gradients. This is Receptor-type guanylate cyclase gcy-23 from Caenorhabditis elegans.